Reading from the N-terminus, the 670-residue chain is Receptor for retinol uptake STRA6 (670 aa).

Over 1 to 50 the chain is Extracellular; sequence MESQASENGSQTSSGVTDDYSSWYIEEPLGAEEVQPEGVIPLCQLTAPPA. N-linked (GlcNAc...) asparagine glycosylation occurs at Asn8. Residues 51 to 71 form a helical membrane-spanning segment; the sequence is LLHACLASLSFLVLLLLALLV. The Cytoplasmic segment spans residues 72–97; the sequence is RRRRLWPRCGHRGLGLPSPVDFLAGD. The helical transmembrane segment at 98–118 threads the bilayer; sequence LSWTVPAAVFVVLFSNLCLLL. Residues 119-144 lie on the Extracellular side of the membrane; sequence PDENPLPFLNLTAASSPDGEMETSRG. Asn128 carries an N-linked (GlcNAc...) asparagine glycan. Residues 145–165 traverse the membrane as a helical segment; that stretch reads PWKLLALLYYPALYYPLAACA. Topologically, residues 166–168 are cytoplasmic; sequence SAG. The chain crosses the membrane as a helical span at residues 169–189; sequence HQAAFLLGTVLSWAHFGVQVW. The Extracellular segment spans residues 190 to 205; it reads QKAECPQDPKIYKHYS. Residues 206–226 form a helical membrane-spanning segment; that stretch reads LLASLPLLLGLGFLSLWYPVQ. Residues 227–296 lie on the Cytoplasmic side of the membrane; the sequence is LVQSLRHRTG…PQPGFRLPLK (70 aa). An interaction with RBP1 region spans residues 235 to 294; it reads TGAGSQGLQTSYSEKYLRTLLCPKKLDSCSHPASKRSLLSRAWAFSHHSIYTPQPGFRLP. The helical transmembrane segment at 297-317 threads the bilayer; sequence LVISATLTGTATYQVALLLLV. Over 318-368 the chain is Extracellular; sequence SVVPTVQKVRAGINTDVSYLLAGFGIVLSEDRQEVVELVKHHLWTVEACYI. Residues 369-389 form a helical membrane-spanning segment; sequence SALVLSCASTFLLLIRSLRTH. Residues 390–423 are Cytoplasmic-facing; that stretch reads RANLQALHRGAALDLDPPLQSIHPSRQAIVSWMS. The helical transmembrane segment at 424–444 threads the bilayer; that stretch reads FCAYQTAFSCLGLLVQQVIFF. At 445-474 the chain is on the extracellular side; sequence LGTTSLAFLVFVPLLHGRNLLLLRSLESTW. A helical membrane pass occupies residues 475–495; it reads PFWLTVALAVILQNIAANWIF. At 496–510 the chain is on the cytoplasmic side; it reads LRTHHGYPELTNRRM. The helical intramembrane region spans 511–548; it reads LCVATFLLFPINMLVGAIMAVWRVLISSLYNTVHLGQM. The Cytoplasmic portion of the chain corresponds to 549–670; it reads DLSLLPQRAA…TSAKANGTQP (122 aa). The residue at position 644 (Tyr644) is a Phosphotyrosine.

In terms of assembly, homodimer. Interacts with JAK2 and STAT5. Interacts (via extracellular domains) with RBP4. Interacts (via cytoplasmic domains) with RBP1. In terms of processing, phosphorylated on tyrosine residues in response to RBP4 binding. Phosphorylation requires the presence of LRAT, suggesting it may be triggered by the uptake of retinol that is then metabolized within the cell to retinoids that function as signaling molecules. As to expression, widely expressed in the embryo. Detected in adult in the retinal pigment epithelium in the eye. In the adult, is highly expressed in cells that compose blood-organ barriers in the brain (choroid plexus and the brain microvascular), in testis (the basal layer of the seminiferous epithelium), in the yolk sac, and in the chorioallantoic placenta. Detected in white adipose tissue and skeletal muscle, but not in liver (at protein level). Widely expressed in adult, with high expression levels in the eye. Detected in brain, cerebellum, testis, pituitary, pancreas, kidney, spleen, and female genital tract; and at very low levels in heart and lung. Not detected in liver.

Its subcellular location is the cell membrane. Functionally, functions as a retinol transporter. Accepts all-trans retinol from the extracellular retinol-binding protein RBP4, facilitates retinol transport across the cell membrane, and then transfers retinol to the cytoplasmic retinol-binding protein RBP1. Retinol uptake is enhanced by LRAT, an enzyme that converts retinol to all-trans retinyl esters, the storage forms of vitamin A. Contributes to the activation of a signaling cascade that depends on retinol transport and LRAT-dependent generation of retinol metabolites that then trigger activation of JAK2 and its target STAT5, and ultimately increase the expression of SOCS3 and inhibit cellular responses to insulin. Important for the homeostasis of vitamin A and its derivatives, such as retinoic acid and 11-cis-retinal. STRA6-mediated transport is particularly important in the eye, and under conditions of dietary vitamin A deficiency. Does not transport retinoic acid. The polypeptide is Receptor for retinol uptake STRA6 (Stra6) (Mus musculus (Mouse)).